We begin with the raw amino-acid sequence, 48 residues long: SPbeta prophage-derived uncharacterized protein YotE (48 aa).

The chain is SPbeta prophage-derived uncharacterized protein YotE (yotE) from Bacillus subtilis (strain 168).